The chain runs to 243 residues: Phosphoribosylaminoimidazole-succinocarboxamide synthase (243 aa).

Belongs to the SAICAR synthetase family.

It catalyses the reaction 5-amino-1-(5-phospho-D-ribosyl)imidazole-4-carboxylate + L-aspartate + ATP = (2S)-2-[5-amino-1-(5-phospho-beta-D-ribosyl)imidazole-4-carboxamido]succinate + ADP + phosphate + 2 H(+). It functions in the pathway purine metabolism; IMP biosynthesis via de novo pathway; 5-amino-1-(5-phospho-D-ribosyl)imidazole-4-carboxamide from 5-amino-1-(5-phospho-D-ribosyl)imidazole-4-carboxylate: step 1/2. The protein is Phosphoribosylaminoimidazole-succinocarboxamide synthase of Methanobrevibacter smithii (strain ATCC 35061 / DSM 861 / OCM 144 / PS).